The sequence spans 133 residues: Small ribosomal subunit protein uS11 (133 aa).

The tract at residues V114–V133 is disordered.

The protein belongs to the universal ribosomal protein uS11 family. In terms of assembly, part of the 30S ribosomal subunit.

In terms of biological role, located on the platform of the 30S subunit. The chain is Small ribosomal subunit protein uS11 from Archaeoglobus fulgidus (strain ATCC 49558 / DSM 4304 / JCM 9628 / NBRC 100126 / VC-16).